Consider the following 171-residue polypeptide: 3-hydroxydecanoyl-[acyl-carrier-protein] dehydratase (171 aa).

Residue His-70 is part of the active site.

This sequence belongs to the thioester dehydratase family. FabA subfamily. Homodimer.

It localises to the cytoplasm. The catalysed reaction is a (3R)-hydroxyacyl-[ACP] = a (2E)-enoyl-[ACP] + H2O. It catalyses the reaction (3R)-hydroxydecanoyl-[ACP] = (2E)-decenoyl-[ACP] + H2O. The enzyme catalyses (2E)-decenoyl-[ACP] = (3Z)-decenoyl-[ACP]. It participates in lipid metabolism; fatty acid biosynthesis. Necessary for the introduction of cis unsaturation into fatty acids. Catalyzes the dehydration of (3R)-3-hydroxydecanoyl-ACP to E-(2)-decenoyl-ACP and then its isomerization to Z-(3)-decenoyl-ACP. Can catalyze the dehydratase reaction for beta-hydroxyacyl-ACPs with saturated chain lengths up to 16:0, being most active on intermediate chain length. The chain is 3-hydroxydecanoyl-[acyl-carrier-protein] dehydratase from Stenotrophomonas maltophilia (strain R551-3).